The chain runs to 242 residues: Biosynthetic peptidoglycan transglycosylase (242 aa).

The helical transmembrane segment at 19 to 39 (LMVVLAIFWGGGIALFSVAPV) threads the bilayer.

This sequence belongs to the glycosyltransferase 51 family.

It localises to the cell inner membrane. It catalyses the reaction [GlcNAc-(1-&gt;4)-Mur2Ac(oyl-L-Ala-gamma-D-Glu-L-Lys-D-Ala-D-Ala)](n)-di-trans,octa-cis-undecaprenyl diphosphate + beta-D-GlcNAc-(1-&gt;4)-Mur2Ac(oyl-L-Ala-gamma-D-Glu-L-Lys-D-Ala-D-Ala)-di-trans,octa-cis-undecaprenyl diphosphate = [GlcNAc-(1-&gt;4)-Mur2Ac(oyl-L-Ala-gamma-D-Glu-L-Lys-D-Ala-D-Ala)](n+1)-di-trans,octa-cis-undecaprenyl diphosphate + di-trans,octa-cis-undecaprenyl diphosphate + H(+). It participates in cell wall biogenesis; peptidoglycan biosynthesis. Its function is as follows. Peptidoglycan polymerase that catalyzes glycan chain elongation from lipid-linked precursors. This chain is Biosynthetic peptidoglycan transglycosylase, found in Escherichia coli O127:H6 (strain E2348/69 / EPEC).